Here is an 84-residue protein sequence, read N- to C-terminus: Exodeoxyribonuclease 7 small subunit (84 aa).

It belongs to the XseB family. Heterooligomer composed of large and small subunits.

The protein localises to the cytoplasm. It catalyses the reaction Exonucleolytic cleavage in either 5'- to 3'- or 3'- to 5'-direction to yield nucleoside 5'-phosphates.. Functionally, bidirectionally degrades single-stranded DNA into large acid-insoluble oligonucleotides, which are then degraded further into small acid-soluble oligonucleotides. This Herminiimonas arsenicoxydans protein is Exodeoxyribonuclease 7 small subunit.